A 141-amino-acid chain; its full sequence is MLQPKRTKYRKVQKGKMKGNSQRGHELSNGMFGIKSVHEDGMFLTSRQIEAARIAATRFMKREGQLWIKIFPDKPITKKPLEVRMGKGKGAVEYWAAVVKPGRIMFEVGGVPLSVAKEALRLAAQKLPCKTKFVVARDFEA.

Over residues 1–17 the composition is skewed to basic residues; sequence MLQPKRTKYRKVQKGKM. The interval 1-29 is disordered; that stretch reads MLQPKRTKYRKVQKGKMKGNSQRGHELSN.

The protein belongs to the universal ribosomal protein uL16 family. In terms of assembly, part of the 50S ribosomal subunit.

Its function is as follows. Binds 23S rRNA and is also seen to make contacts with the A and possibly P site tRNAs. The sequence is that of Large ribosomal subunit protein uL16 from Flavobacterium psychrophilum (strain ATCC 49511 / DSM 21280 / CIP 103535 / JIP02/86).